The following is a 506-amino-acid chain: ATP synthase subunit alpha (506 aa).

Residue 171 to 178 (GDRQTGKT) coordinates ATP.

It belongs to the ATPase alpha/beta chains family. As to quaternary structure, F-type ATPases have 2 components, CF(1) - the catalytic core - and CF(0) - the membrane proton channel. CF(1) has five subunits: alpha(3), beta(3), gamma(1), delta(1), epsilon(1). CF(0) has four main subunits: a(1), b(1), b'(1) and c(9-12).

The protein resides in the cellular thylakoid membrane. The enzyme catalyses ATP + H2O + 4 H(+)(in) = ADP + phosphate + 5 H(+)(out). In terms of biological role, produces ATP from ADP in the presence of a proton gradient across the membrane. The alpha chain is a regulatory subunit. The sequence is that of ATP synthase subunit alpha from Nostoc sp. (strain PCC 7120 / SAG 25.82 / UTEX 2576).